Consider the following 425-residue polypeptide: MAVAVGRPSNEELRNLSLSGHVGFDSLPDQLVNKSTSQGFCFNILCVGETGIGKSTLMDTLFNTKFESDPATHNEPGVRLKARSYELQESNVRLKLTIVDTVGFGDQINKDDSYKPIVEYIDAQFEAYLQEELKIKRSLFNYHDTRIHACLYFIAPTGHSLKSLDLVTMKKLDSKVNIIPIIAKADTIAKNELHKFKSKIMSELVSNGVQIYQFPTDEETVAEINATMSVHLPFAVVGSTEEVKIGNKMAKARQYPWGVVQVENENHCDFVKLREMLIRVNMEDLREQTHTRHYELYRRCKLEEMGFKDTDPDSKPFSLQETYEAKRNEFLGELQKKEEEMRQMFVMRVKEKEAELKEAEKELHEKFDLLKRTHQEEKKKVEDKKKELEEEVNNFQKKKAAAQLLQSQAQQSGAQQTKKDKDKKN.

A2 bears the N-acetylalanine mark. S9 is subject to Phosphoserine. One can recognise a Septin-type G domain in the interval 38–304; that stretch reads QGFCFNILCV…ELYRRCKLEE (267 aa). The G1 motif stretch occupies residues 48–55; sequence GETGIGKS. GTP contacts are provided by residues 48–55, G103, 184–192, G238, and R253; these read GETGIGKS and KADTIAKNE. The interval 100 to 103 is G3 motif; that stretch reads DTVG. The interval 183-186 is G4 motif; sequence AKAD. Residues 320 to 410 are a coiled coil; sequence QETYEAKRNE…AAQLLQSQAQ (91 aa). The tract at residues 399–425 is disordered; that stretch reads KAAAQLLQSQAQQSGAQQTKKDKDKKN. The span at 401-416 shows a compositional bias: low complexity; it reads AAQLLQSQAQQSGAQQ.

It belongs to the TRAFAC class TrmE-Era-EngA-EngB-Septin-like GTPase superfamily. Septin GTPase family. In terms of assembly, septins polymerize into heterooligomeric protein complexes that form filaments, and can associate with cellular membranes, actin filaments and microtubules. Forms homooligomers. GTPase activity is required for filament formation. Interacts with SEPTIN7, SEPTIN9 and SEPTIN12.

The protein localises to the cytoplasm. It localises to the cytoskeleton. Its subcellular location is the synapse. It is found in the cell projection. The protein resides in the dendritic spine. The protein localises to the axon. Functionally, filament-forming cytoskeletal GTPase. May play a role in cytokinesis (Potential). May play a role in the cytoarchitecture of neurons, including dendritic arborization and dendritic spines, and in GABAergic synaptic connectivity. The polypeptide is Septin-11 (Bos taurus (Bovine)).